The following is a 137-amino-acid chain: Large-conductance mechanosensitive channel (137 aa).

Transmembrane regions (helical) follow at residues 9–29 (AFAVKGNVVDMAVGIIIGAAF), 32–52 (IVSSFVGDVVMPPIGLLIGGV), 54–74 (FGDLAVTLKAAAGDTPAVVLA), and 79–99 (IQSIIDFVIIAFAIFMGVKVI).

It belongs to the MscL family. As to quaternary structure, homopentamer.

It is found in the cell inner membrane. Its function is as follows. Channel that opens in response to stretch forces in the membrane lipid bilayer. May participate in the regulation of osmotic pressure changes within the cell. The polypeptide is Large-conductance mechanosensitive channel (Pseudomonas fluorescens (strain ATCC BAA-477 / NRRL B-23932 / Pf-5)).